A 377-amino-acid chain; its full sequence is Anhydro-N-acetylmuramic acid kinase (377 aa).

19 to 26 is an ATP binding site; sequence GTSLDGVD.

It belongs to the anhydro-N-acetylmuramic acid kinase family.

The enzyme catalyses 1,6-anhydro-N-acetyl-beta-muramate + ATP + H2O = N-acetyl-D-muramate 6-phosphate + ADP + H(+). Its pathway is amino-sugar metabolism; 1,6-anhydro-N-acetylmuramate degradation. It participates in cell wall biogenesis; peptidoglycan recycling. Functionally, catalyzes the specific phosphorylation of 1,6-anhydro-N-acetylmuramic acid (anhMurNAc) with the simultaneous cleavage of the 1,6-anhydro ring, generating MurNAc-6-P. Is required for the utilization of anhMurNAc either imported from the medium or derived from its own cell wall murein, and thus plays a role in cell wall recycling. This chain is Anhydro-N-acetylmuramic acid kinase, found in Roseobacter denitrificans (strain ATCC 33942 / OCh 114) (Erythrobacter sp. (strain OCh 114)).